Reading from the N-terminus, the 417-residue chain is Phosphoglycerate kinase (417 aa).

(2R)-3-phosphoglycerate is bound by residues Val-23, Asp-24, Phe-25, Asn-26, Gln-38, Arg-39, Ser-62, His-63, Gly-65, Arg-66, Leu-121, Arg-122, His-169, and Arg-170. Residue Gly-213 coordinates ADP. Gly-213 lines the CDP pocket. Positions 214 and 215 each coordinate AMP. Ala-214 lines the ATP pocket. Ala-214 contacts Mg(2+). Asp-218 contacts CDP. Residue Asp-218 coordinates Mg(2+). Lys-219 serves as a coordination point for AMP. Residue Lys-219 coordinates ATP. Residue Gly-237 participates in ADP binding. Gly-237 is a binding site for CDP. AMP-binding residues include Gly-238 and Gly-312. 2 residues coordinate ATP: Gly-238 and Gly-312. Residues Gly-337 and Phe-342 each contribute to the CDP site. Phe-342 is an ADP binding site. Glu-343 is an AMP binding site. The ATP site is built by Glu-343, Asp-374, and Thr-375. Asp-374 provides a ligand contact to Mg(2+).

It belongs to the phosphoglycerate kinase family. In terms of assembly, monomer. Mg(2+) is required as a cofactor.

It is found in the cytoplasm. The protein resides in the secreted. It localises to the cell wall. The protein localises to the mitochondrion. The catalysed reaction is (2R)-3-phosphoglycerate + ATP = (2R)-3-phospho-glyceroyl phosphate + ADP. It functions in the pathway carbohydrate degradation; glycolysis; pyruvate from D-glyceraldehyde 3-phosphate: step 2/5. Its function is as follows. Catalyzes one of the two ATP producing reactions in the glycolytic pathway via the reversible conversion of 1,3-diphosphoglycerate to 3-phosphoglycerate. Both L- and D- forms of purine and pyrimidine nucleotides can be used as substrates, but the activity is much lower on pyrimidines. Negatively regulates the biosynthesis of acetyl-CoA from pyruvate in the mitochondrion. This chain is Phosphoglycerate kinase (PGK1), found in Candida albicans (strain SC5314 / ATCC MYA-2876) (Yeast).